The chain runs to 348 residues: Nicotinate-nucleotide--dimethylbenzimidazole phosphoribosyltransferase (348 aa).

Glutamate 316 (proton acceptor) is an active-site residue.

The protein belongs to the CobT family.

The enzyme catalyses 5,6-dimethylbenzimidazole + nicotinate beta-D-ribonucleotide = alpha-ribazole 5'-phosphate + nicotinate + H(+). It functions in the pathway nucleoside biosynthesis; alpha-ribazole biosynthesis; alpha-ribazole from 5,6-dimethylbenzimidazole: step 1/2. In terms of biological role, catalyzes the synthesis of alpha-ribazole-5'-phosphate from nicotinate mononucleotide (NAMN) and 5,6-dimethylbenzimidazole (DMB). The polypeptide is Nicotinate-nucleotide--dimethylbenzimidazole phosphoribosyltransferase (Xanthomonas euvesicatoria pv. vesicatoria (strain 85-10) (Xanthomonas campestris pv. vesicatoria)).